The sequence spans 360 residues: MTTVLQRRQTANLWERFCDWITSTENRLYIGWFGVIMIPTLLAATICFVIAFIAAPPVDIDGIREPVSGSLLYGNNIITAAVVPSSNAIGLHLYPIWDAASLDEWLYNGGPYQLIIFHFLIGIFCYMGREWELSYRLGMRPWIPVAFSAPVAAATAVLLIYPIGQGSFSDGLMLGISGTFNFMIVFQAEHNILMHPFHMLGVAGVFGGALFAAMHGSLVTSSLIRETTETESTNYGYKFGQEEETYNIVAAHGYFGRLIFQYASFNNSRSLHFFLAAWPVVGIWFAALGISTMAFNLNGFNFNHSVVDAQGNVINTWADIINRANIGIEVMHERNAHNFPLDLASGELAPVAMIAPSIEA.

3 helical membrane passes run 29–46 (YIGWFGVIMIPTLLAATI), 118–133 (HFLIGIFCYMGREWEL), and 142–156 (WIPVAFSAPVAAATA). H118 is a chlorophyll a binding site. Residue Y126 participates in pheophytin a binding. The [CaMn4O5] cluster site is built by D170 and E189. The helical transmembrane segment at 197–218 (FHMLGVAGVFGGALFAAMHGSL) threads the bilayer. H198 is a chlorophyll a binding site. A quinone-binding positions include H215 and 264–265 (SF). A Fe cation-binding site is contributed by H215. H272 lines the Fe cation pocket. A helical membrane pass occupies residues 274–288 (FLAAWPVVGIWFAAL). [CaMn4O5] cluster-binding residues include H332, E333, D342, and A344. The propeptide occupies 345–360 (SGELAPVAMIAPSIEA).

It belongs to the reaction center PufL/M/PsbA/D family. PSII is composed of 1 copy each of membrane proteins PsbA, PsbB, PsbC, PsbD, PsbE, PsbF, PsbH, PsbI, PsbJ, PsbK, PsbL, PsbM, PsbT, PsbX, PsbY, PsbZ, Psb30/Ycf12, peripheral proteins PsbO, CyanoQ (PsbQ), PsbU, PsbV and a large number of cofactors. It forms dimeric complexes. It depends on The D1/D2 heterodimer binds P680, chlorophylls that are the primary electron donor of PSII, and subsequent electron acceptors. It shares a non-heme iron and each subunit binds pheophytin, quinone, additional chlorophylls, carotenoids and lipids. D1 provides most of the ligands for the Mn4-Ca-O5 cluster of the oxygen-evolving complex (OEC). There is also a Cl(-1) ion associated with D1 and D2, which is required for oxygen evolution. The PSII complex binds additional chlorophylls, carotenoids and specific lipids. as a cofactor. In terms of processing, tyr-161 forms a radical intermediate that is referred to as redox-active TyrZ, YZ or Y-Z. Post-translationally, C-terminally processed by CtpA; processing is essential to allow assembly of the oxygen-evolving complex and thus photosynthetic growth.

Its subcellular location is the cellular thylakoid membrane. It carries out the reaction 2 a plastoquinone + 4 hnu + 2 H2O = 2 a plastoquinol + O2. Photosystem II (PSII) is a light-driven water:plastoquinone oxidoreductase that uses light energy to abstract electrons from H(2)O, generating O(2) and a proton gradient subsequently used for ATP formation. It consists of a core antenna complex that captures photons, and an electron transfer chain that converts photonic excitation into a charge separation. The D1/D2 (PsbA/PsbD) reaction center heterodimer binds P680, the primary electron donor of PSII as well as several subsequent electron acceptors. The sequence is that of Photosystem II protein D1 2 from Synechococcus elongatus.